Reading from the N-terminus, the 1007-residue chain is Exportin-7 (1007 aa).

It belongs to the exportin family.

The protein resides in the nucleus. The protein localises to the cytoplasm. It is found in the nuclear pore complex. Its function is as follows. Mediates the nuclear export of proteins (cargos) with broad substrate specificity. This Dictyostelium discoideum (Social amoeba) protein is Exportin-7 (xpo7).